The sequence spans 669 residues: Exostosin-like 1 (669 aa).

Over 1–8 (MLWRRKSF) the chain is Cytoplasmic. A helical; Signal-anchor for type II membrane protein transmembrane segment spans residues 9–29 (WLALSAFWLLLVLLGVFPLRL). Residues 30–669 (AVLPGPLPGR…RKKYRSLEKP (640 aa)) are Lumenal-facing. 2 N-linked (GlcNAc...) asparagine glycosylation sites follow: asparagine 263 and asparagine 480. A disulfide bond links cysteine 577 and cysteine 627. A disordered region spans residues 601–621 (RQHPEAVPMDSGDPRPVPEPQ).

Belongs to the glycosyltransferase 47 family.

The protein resides in the endoplasmic reticulum membrane. The enzyme catalyses 3-O-{[(1-&gt;4)-beta-D-GlcA-(1-&gt;4)-alpha-D-GlcNAc](n)-(1-&gt;4)-beta-D-GlcA-(1-&gt;3)-beta-D-Gal-(1-&gt;3)-beta-D-Gal-(1-&gt;4)-beta-D-Xyl}-L-seryl-[protein] + UDP-N-acetyl-alpha-D-glucosamine = 3-O-{alpha-D-GlcNAc-[(1-&gt;4)-beta-D-GlcA-(1-&gt;4)-alpha-D-GlcNAc](n)-(1-&gt;4)-beta-D-GlcA-(1-&gt;3)-beta-D-Gal-(1-&gt;3)-beta-D-Gal-(1-&gt;4)-beta-D-Xyl}-L-seryl-[protein] + UDP + H(+). It participates in protein modification; protein glycosylation. Its function is as follows. Glycosyltransferase required for the biosynthesis of heparan-sulfate (HS). Transfers N-acetyl-alpha-D-glucosamine to the nascent HS chain (GlcNAcT-II activity). Appears to lack GlcNAcT I and GlcAT-II activities. The protein is Exostosin-like 1 (Extl1) of Mus musculus (Mouse).